The chain runs to 378 residues: MTQKLHIALLFGGNSSEHDVSKRSAHNIYDALDKEKYDVSLFMFTKDGILLGNEDSQKIFDGEPEDQVVAEAYQKMDMSSPLAPIMALNEQKEIDFFFPVIHGNLGEDGTIQGLFKLLNKPYVGSNIAASAMSFDKDLTKKIISQAGIRNTPYVVVTPENQADYSWGRIEEKLGNLTFVKPAKQGSSVGIHRVTNAEEYEKALDDAFKYDYKILVEQGIANPQEIEISILGNEHPIASKLGAVRVPKDDPFYDYENKFVDASGVVFELPVKLPQYLVDEITDMALKAYKALGMKGMARIDFLVDSNNVPYLGEPNTLPGFTNISLYPQMWEVSGISYSDLIDRLIQLGLQEFERNSKIKYDFRKLGTERVGQKKYNED.

The ATP-grasp domain occupies 140–346 (KKIISQAGIR…YSDLIDRLIQ (207 aa)). 170–225 (EEKLGNLTFVKPAKQGSSVGIHRVTNAEEYEKALDDAFKYDYKILVEQGIANPQEI) is a binding site for ATP. Positions 300, 313, and 315 each coordinate Mg(2+).

This sequence belongs to the D-alanine--D-alanine ligase family. Requires Mg(2+) as cofactor. It depends on Mn(2+) as a cofactor.

It is found in the cytoplasm. The catalysed reaction is 2 D-alanine + ATP = D-alanyl-D-alanine + ADP + phosphate + H(+). It participates in cell wall biogenesis; peptidoglycan biosynthesis. Functionally, cell wall formation. The chain is D-alanine--D-alanine ligase from Limosilactobacillus reuteri (strain DSM 20016) (Lactobacillus reuteri).